The primary structure comprises 469 residues: MAFLMHLLVCVFGMGSWVTINGLWVELPLLVMELPEGWYLPSYLTVVIQLANIGPLLVTLLHHFRPSCLSEVPIIFTLLGVGTVTCIIFAFLWNMTSWVLDGHHSIAFLVLTFFLALVDCTSSVTFLPFMSRLPTYYLTTFFVGEGLSGLLPALVALAQGSGLTTCVNVTEISDSVPSPVPTRETDIAQGVPRALVSALPGMEAPLSHLESRYLPAHFSPLVFFLLLSIMMACCLVAFFVLQRQPRCWEASVEDLLNDQVTLHSIRPREENDLGPAGTVDSSQGQGYLEEKAAPCCPAHLAFIYTLVAFVNALTNGMLPSVQTYSCLSYGPVAYHLAATLSIVANPLASLVSMFLPNRSLLFLGVLSVLGTCFGGYNMAMAVMSPCPLLQGHWGGEVLIVASWVLFSGCLSYVKVMLGVVLRDLSRSALLWCGAAVQLGSLLGALLMFPLVNVLRLFSSADFCNLHCPA.

The Cytoplasmic portion of the chain corresponds to 1–2; it reads MA. A helical membrane pass occupies residues 3-23; the sequence is FLMHLLVCVFGMGSWVTINGL. At 24–43 the chain is on the extracellular side; it reads WVELPLLVMELPEGWYLPSY. Residues 44–64 traverse the membrane as a helical segment; the sequence is LTVVIQLANIGPLLVTLLHHF. Residues 65–71 lie on the Cytoplasmic side of the membrane; that stretch reads RPSCLSE. Residues 72–92 form a helical membrane-spanning segment; sequence VPIIFTLLGVGTVTCIIFAFL. Residues 93 to 97 are Extracellular-facing; sequence WNMTS. Asn94 is a glycosylation site (N-linked (GlcNAc...) asparagine). A helical membrane pass occupies residues 98–118; it reads WVLDGHHSIAFLVLTFFLALV. Residues 119–137 are Cytoplasmic-facing; the sequence is DCTSSVTFLPFMSRLPTYY. The helical transmembrane segment at 138-158 threads the bilayer; the sequence is LTTFFVGEGLSGLLPALVALA. Topologically, residues 159 to 220 are extracellular; it reads QGSGLTTCVN…SRYLPAHFSP (62 aa). Asn168 carries N-linked (GlcNAc...) asparagine glycosylation. A helical transmembrane segment spans residues 221–241; sequence LVFFLLLSIMMACCLVAFFVL. At 242–292 the chain is on the cytoplasmic side; sequence QRQPRCWEASVEDLLNDQVTLHSIRPREENDLGPAGTVDSSQGQGYLEEKA. Ser251 carries the phosphoserine modification. A helical membrane pass occupies residues 293–313; that stretch reads APCCPAHLAFIYTLVAFVNAL. The Extracellular portion of the chain corresponds to 314–335; it reads TNGMLPSVQTYSCLSYGPVAYH. Residues 336 to 356 traverse the membrane as a helical segment; the sequence is LAATLSIVANPLASLVSMFLP. Topologically, residues 357–359 are cytoplasmic; it reads NRS. The helical transmembrane segment at 360-380 threads the bilayer; it reads LLFLGVLSVLGTCFGGYNMAM. The Extracellular segment spans residues 381–396; the sequence is AVMSPCPLLQGHWGGE. Cys386 and Cys463 are disulfide-bonded. A helical membrane pass occupies residues 397–417; sequence VLIVASWVLFSGCLSYVKVML. Topologically, residues 418-427 are cytoplasmic; that stretch reads GVVLRDLSRS. Residues 428–448 form a helical membrane-spanning segment; that stretch reads ALLWCGAAVQLGSLLGALLMF. Residues 449–469 lie on the Extracellular side of the membrane; sequence PLVNVLRLFSSADFCNLHCPA.

Belongs to the riboflavin transporter family. In terms of tissue distribution, predominantly expressed in testis. Highly expressed in small intestine and prostate.

The protein localises to the apical cell membrane. It is found in the cell membrane. It localises to the nucleus membrane. The protein resides in the cytoplasm. It carries out the reaction riboflavin(in) = riboflavin(out). Its activity is regulated as follows. Activity is strongly inhibited by riboflavin analogs, such as lumiflavin, flavin mononucleotide (FMN), flavin adenine dinucleotide (FAD), by methylene blue, and to a lesser extent by amiloride. Riboflavin transport is Na(+)-independent at low pH but significantly reduced by Na(+) depletion under neutral pH conditions. Functionally, plasma membrane transporter mediating the uptake by cells of the water soluble vitamin B2/riboflavin that plays a key role in biochemical oxidation-reduction reactions of the carbohydrate, lipid, and amino acid metabolism. Humans are unable to synthesize vitamin B2/riboflavin and must obtain it via intestinal absorption. This is Solute carrier family 52, riboflavin transporter, member 3 (SLC52A3) from Homo sapiens (Human).